The chain runs to 163 residues: ATP synthase subunit b 1 (163 aa).

Residues 7–27 (PETWVAIAFVILMGLFAYLGV) traverse the membrane as a helical segment.

The protein belongs to the ATPase B chain family. F-type ATPases have 2 components, F(1) - the catalytic core - and F(0) - the membrane proton channel. F(1) has five subunits: alpha(3), beta(3), gamma(1), delta(1), epsilon(1). F(0) has three main subunits: a(1), b(2) and c(10-14). The alpha and beta chains form an alternating ring which encloses part of the gamma chain. F(1) is attached to F(0) by a central stalk formed by the gamma and epsilon chains, while a peripheral stalk is formed by the delta and b chains.

Its subcellular location is the cell inner membrane. F(1)F(0) ATP synthase produces ATP from ADP in the presence of a proton or sodium gradient. F-type ATPases consist of two structural domains, F(1) containing the extramembraneous catalytic core and F(0) containing the membrane proton channel, linked together by a central stalk and a peripheral stalk. During catalysis, ATP synthesis in the catalytic domain of F(1) is coupled via a rotary mechanism of the central stalk subunits to proton translocation. In terms of biological role, component of the F(0) channel, it forms part of the peripheral stalk, linking F(1) to F(0). The polypeptide is ATP synthase subunit b 1 (Bradyrhizobium sp. (strain BTAi1 / ATCC BAA-1182)).